Here is a 56-residue protein sequence, read N- to C-terminus: Attractin (56 aa).

Cystine bridges form between cysteine 4/cysteine 41, cysteine 13/cysteine 33, and cysteine 20/cysteine 26. Asparagine 25 carries N-linked (GlcNAc...) asparagine glycosylation.

Produced by the albumen gland of the egg cordons.

The protein resides in the secreted. Water-borne pheromone that attract the marine mollusk Aplysia into breeding aggregations and coordinate male and female reproductive behavior within the aggregation. This Aplysia depilans (Sea hare) protein is Attractin (ATT).